The chain runs to 315 residues: Probable cell division protein kinase ECU11_1290 (315 aa).

Residues 13–294 (YEKVCRISSG…ASQGLCSGFV (282 aa)) enclose the Protein kinase domain. Residues 19–27 (ISSGSFGNV) and K42 each bind ATP. The active-site Proton acceptor is D138.

Belongs to the protein kinase superfamily. CMGC Ser/Thr protein kinase family. CDC2/CDKX subfamily.

It localises to the nucleus. The catalysed reaction is L-seryl-[protein] + ATP = O-phospho-L-seryl-[protein] + ADP + H(+). It catalyses the reaction L-threonyl-[protein] + ATP = O-phospho-L-threonyl-[protein] + ADP + H(+). May play a role in the control of the eukaryotic cell cycle. This Encephalitozoon cuniculi (strain GB-M1) (Microsporidian parasite) protein is Probable cell division protein kinase ECU11_1290.